Consider the following 396-residue polypeptide: Flavohemoprotein (396 aa).

One can recognise a Globin domain in the interval 1-136; it reads MLDAQTIATV…LANVFINREA (136 aa). Histidine 85 lines the heme b pocket. Active-site charge relay system residues include tyrosine 95 and glutamate 135. The tract at residues 147–396 is reductase; it reads GGWEGTRDFR…YECFGPHKVL (250 aa). Residues 150–255 enclose the FAD-binding FR-type domain; sequence EGTRDFRIVA…VAPAGDFFMA (106 aa). FAD is bound by residues tyrosine 188 and 204–207; that span reads RQYS. 268–273 is an NADP(+) binding site; the sequence is GVGQTP. An FAD-binding site is contributed by 389 to 392; that stretch reads CFGP.

Belongs to the globin family. Two-domain flavohemoproteins subfamily. The protein in the C-terminal section; belongs to the flavoprotein pyridine nucleotide cytochrome reductase family. In terms of assembly, monomer. FAD serves as cofactor. Heme b is required as a cofactor.

The protein resides in the cytoplasm. It carries out the reaction 2 nitric oxide + NADPH + 2 O2 = 2 nitrate + NADP(+) + H(+). It catalyses the reaction 2 nitric oxide + NADH + 2 O2 = 2 nitrate + NAD(+) + H(+). Functionally, is involved in NO detoxification in an aerobic process, termed nitric oxide dioxygenase (NOD) reaction that utilizes O(2) and NAD(P)H to convert NO to nitrate, which protects the bacterium from various noxious nitrogen compounds. Therefore, plays a central role in the inducible response to nitrosative stress. In terms of biological role, in the presence of oxygen and NADH, HMP has NADH oxidase activity, which leads to the generation of superoxide and H(2)O(2), both in vitro and in vivo, and it has been suggested that HMP might act as an amplifier of superoxide stress. Under anaerobic conditions, HMP also exhibits nitric oxide reductase and FAD reductase activities. However, all these reactions are much lower than NOD activity. Various electron acceptors are also reduced by HMP in vitro, including dihydropterine, ferrisiderophores, ferric citrate, cytochrome c, nitrite, S-nitrosoglutathione, and alkylhydroperoxides. However, it is unknown if these reactions are of any biological significance in vivo. The polypeptide is Flavohemoprotein (hmp) (Escherichia coli (strain K12)).